Consider the following 286-residue polypeptide: Diaminopimelate epimerase (286 aa).

Residues asparagine 13 and asparagine 66 each coordinate substrate. Cysteine 75 serves as the catalytic Proton donor. Residues 76–77 (GN), asparagine 165, asparagine 198, and 216–217 (ER) each bind substrate. Cysteine 225 acts as the Proton acceptor in catalysis. Residue 226-227 (GT) coordinates substrate.

Belongs to the diaminopimelate epimerase family. Homodimer.

The protein localises to the cytoplasm. It catalyses the reaction (2S,6S)-2,6-diaminopimelate = meso-2,6-diaminopimelate. Its pathway is amino-acid biosynthesis; L-lysine biosynthesis via DAP pathway; DL-2,6-diaminopimelate from LL-2,6-diaminopimelate: step 1/1. Catalyzes the stereoinversion of LL-2,6-diaminopimelate (L,L-DAP) to meso-diaminopimelate (meso-DAP), a precursor of L-lysine and an essential component of the bacterial peptidoglycan. In Thermosynechococcus vestitus (strain NIES-2133 / IAM M-273 / BP-1), this protein is Diaminopimelate epimerase.